Here is a 785-residue protein sequence, read N- to C-terminus: MPPDDRLTAVLPPVRDGDIAPPIDVVRAALEGSPPPKPPPPPPPGRGGGGPSGPGGPSGPGRQFRINWKWVRRGSAIAVAVMVLLPLITFGMAYMIVDVPEPGDIRTPQVSTILASDGSEIARIVPPEGNRVDVKIDQIPVHVRDAVMAAEDRDFYSNPGFSWTGFLRAIKNNLFGGGGLQGGSTITQQYVKNALVGDERSGIGGLIRKAKELVISTKMSGEWSKDAVLQAYLNIIYFGRGAYGISAASKAYFDKPVEQLDVAEGALLAALIQRPSTLDPAVDPEGAADRWNWVLDGMVDIGALSQADRDAQVFPPTVPPDYAFQQNQTTGPNGLIERQVTNELLDLFDINEQTLNTEGLQITTTIDPKAQEAAVDAVDKYLEGQDPDMRAAVVSIDPRTGGIKAYYGGSDANGFDFAQAGLPTGSSFKVFALVAALQQGIGLGYQIDSGPLEVNGIKIGNVEGEGCGTCSIAEALKRSLNTSYYRLMLKLENGPADVAEAAHDAGVAESFPGVEHTLSEDGKGGPPNNGVVLGQYQSRVLDMASAYATLAASGVYHKPHFVEKVVNSSGQVLFDASKEDNGEERIDKAVADNVTSAMQPIAGWSRGHNLAGGRPSAAKTGTVQLGDTGDNRDAWMVGYTPSLSTAVWVGTTEGVKPLVNKWGSPIYGSGLPSDIWKATMDGALEGTDVESFPKPTEIGGYAGVPQAPAAPPPSAGPPTDPGQPSVTVIQPTIEVAPGITIPIGPPTTVPVGPPPGAPGAPVGPGAPEVPVAPGAPGVPGAPPPP.

The segment at 1–61 (MPPDDRLTAV…SGPGGPSGPG (61 aa)) is disordered. Positions 33–45 (SPPPKPPPPPPPG) are enriched in pro residues. Residues 46–59 (RGGGGPSGPGGPSG) are compositionally biased toward gly residues. A helical membrane pass occupies residues 77–97 (IAVAVMVLLPLITFGMAYMIV). The interval 118 to 299 (GSEIARIVPP…RWNWVLDGMV (182 aa)) is transglycosylase. Glu-151 acts as the Proton donor; for transglycosylase activity in catalysis. The interval 392–662 (AVVSIDPRTG…EGVKPLVNKW (271 aa)) is transpeptidase. Residue Ser-426 is the Acyl-ester intermediate; for transpeptidase activity of the active site. Disordered stretches follow at residues 605-626 (SRGHNLAGGRPSAAKTGTVQLG), 690-726 (ESFPKPTEIGGYAGVPQAPAAPPPSAGPPTDPGQPSV), and 738-785 (GITI…PPPP). Composition is skewed to pro residues over residues 708–721 (PAAPPPSAGPPTDP) and 743–758 (IGPPTTVPVGPPPGAP). Residues 759–775 (GAPVGPGAPEVPVAPGA) show a composition bias toward low complexity.

It localises to the cell membrane. It catalyses the reaction [GlcNAc-(1-&gt;4)-Mur2Ac(oyl-L-Ala-gamma-D-Glu-L-Lys-D-Ala-D-Ala)](n)-di-trans,octa-cis-undecaprenyl diphosphate + beta-D-GlcNAc-(1-&gt;4)-Mur2Ac(oyl-L-Ala-gamma-D-Glu-L-Lys-D-Ala-D-Ala)-di-trans,octa-cis-undecaprenyl diphosphate = [GlcNAc-(1-&gt;4)-Mur2Ac(oyl-L-Ala-gamma-D-Glu-L-Lys-D-Ala-D-Ala)](n+1)-di-trans,octa-cis-undecaprenyl diphosphate + di-trans,octa-cis-undecaprenyl diphosphate + H(+). The enzyme catalyses Preferential cleavage: (Ac)2-L-Lys-D-Ala-|-D-Ala. Also transpeptidation of peptidyl-alanyl moieties that are N-acyl substituents of D-alanine.. Its pathway is cell wall biogenesis; peptidoglycan biosynthesis. In terms of biological role, cell wall formation. Synthesis of cross-linked peptidoglycan from the lipid intermediates. The enzyme has a penicillin-insensitive transglycosylase N-terminal domain (formation of linear glycan strands) and a penicillin-sensitive transpeptidase C-terminal domain (cross-linking of the peptide subunits). This chain is Penicillin-binding protein 1A (ponA1), found in Mycolicibacterium smegmatis (strain ATCC 700084 / mc(2)155) (Mycobacterium smegmatis).